The chain runs to 238 residues: Probable transcriptional regulatory protein YcdB (238 aa).

This sequence belongs to the TACO1 family. YeeN subfamily.

It localises to the cytoplasm. The protein is Probable transcriptional regulatory protein YcdB (ycdB) of Lactococcus lactis subsp. lactis (strain IL1403) (Streptococcus lactis).